We begin with the raw amino-acid sequence, 670 residues long: Acetyl-coenzyme A synthetase (670 aa).

CoA is bound by residues 205-208 and Thr-326; that span reads RRGR. Residues 402–404, 426–431, Asp-517, Arg-532, and Arg-543 contribute to the ATP site; these read GEP and STWWMT. His-556 and Val-559 together coordinate Mg(2+). Arg-601 is a binding site for CoA. Lys-626 is modified (N6-acetyllysine).

The protein belongs to the ATP-dependent AMP-binding enzyme family. Requires Mg(2+) as cofactor. Post-translationally, acetylated. Deacetylation by the SIR2-homolog deacetylase activates the enzyme.

It catalyses the reaction acetate + ATP + CoA = acetyl-CoA + AMP + diphosphate. In terms of biological role, catalyzes the conversion of acetate into acetyl-CoA (AcCoA), an essential intermediate at the junction of anabolic and catabolic pathways. AcsA undergoes a two-step reaction. In the first half reaction, AcsA combines acetate with ATP to form acetyl-adenylate (AcAMP) intermediate. In the second half reaction, it can then transfer the acetyl group from AcAMP to the sulfhydryl group of CoA, forming the product AcCoA. In Pyrobaculum aerophilum (strain ATCC 51768 / DSM 7523 / JCM 9630 / CIP 104966 / NBRC 100827 / IM2), this protein is Acetyl-coenzyme A synthetase.